The chain runs to 333 residues: DNA-directed RNA polymerase subunit alpha (333 aa).

Residues 1-234 are alpha N-terminal domain (alpha-NTD); the sequence is MQSSVNEFLT…QQLAAFVDLK (234 aa). Residues 248–333 form an alpha C-terminal domain (alpha-CTD) region; the sequence is IDPILLRPVD…SLKKDDKATA (86 aa).

It belongs to the RNA polymerase alpha chain family. In terms of assembly, homodimer. The RNAP catalytic core consists of 2 alpha, 1 beta, 1 beta' and 1 omega subunit. When a sigma factor is associated with the core the holoenzyme is formed, which can initiate transcription.

It carries out the reaction RNA(n) + a ribonucleoside 5'-triphosphate = RNA(n+1) + diphosphate. Its function is as follows. DNA-dependent RNA polymerase catalyzes the transcription of DNA into RNA using the four ribonucleoside triphosphates as substrates. This is DNA-directed RNA polymerase subunit alpha from Pseudomonas putida (Arthrobacter siderocapsulatus).